Consider the following 221-residue polypeptide: Oxaloacetate tautomerase FAHD1, mitochondrial (221 aa).

The N-terminal 24 residues, 1-24 (MASTKPLSRFWEWGKNIVCVGRNY), are a transit peptide targeting the mitochondrion. R22 contacts oxalate. The residue at position 37 (S37) is a Phosphoserine. 3 residues coordinate Mg(2+): E68, E70, and D99. Position 110 is an N6-acetyllysine (K110). The residue at position 112 (K112) is an N6-succinyllysine. K120 lines the oxalate pocket.

Belongs to the FAH family. In terms of assembly, homodimer. The cofactor is Mg(2+). Mn(2+) is required as a cofactor. As to expression, ubiquitous with higher expression in the liver and the kidney (at protein level).

The protein resides in the mitochondrion. It is found in the cytoplasm. Its subcellular location is the cytosol. The enzyme catalyses oxaloacetate = enol-oxaloacetate. It catalyses the reaction oxaloacetate + H(+) = pyruvate + CO2. It carries out the reaction a 3-acylpyruvate + H2O = a carboxylate + pyruvate + H(+). The catalysed reaction is acetylpyruvate + H2O = acetate + pyruvate + H(+). The enzyme catalyses 3-fumarylpyruvate + H2O = fumarate + pyruvate + H(+). Oxaloacetate decarboxylation is potently and competitively inhibited by oxalate. In terms of biological role, tautomerase that converts enol-oxaloacetate, a strong inhibitor of succinate dehydrogenase, to the physiological keto form of oxaloacetate. It is thereby required to maximize aerobic respiration efficiency by preventing succinate dehydrogenase inhibition. Also acts as a weak oxaloacetate decarboxylase (ODx), catalyzing the decarboxylation of oxaloacetate (OAA) to pyruvate and CO(2), and as such is likely a regulatory enzyme in the TCA cycle. Also displays acylpyruvase activity, being able to hydrolyze acetylpyruvate and fumarylpyruvate in vitro. In Mus musculus (Mouse), this protein is Oxaloacetate tautomerase FAHD1, mitochondrial.